A 175-amino-acid polypeptide reads, in one-letter code: Large ribosomal subunit protein uL10 (175 aa).

The protein belongs to the universal ribosomal protein uL10 family. Part of the ribosomal stalk of the 50S ribosomal subunit. The N-terminus interacts with L11 and the large rRNA to form the base of the stalk. The C-terminus forms an elongated spine to which L12 dimers bind in a sequential fashion forming a multimeric L10(L12)X complex.

In terms of biological role, forms part of the ribosomal stalk, playing a central role in the interaction of the ribosome with GTP-bound translation factors. This chain is Large ribosomal subunit protein uL10, found in Cupriavidus taiwanensis (strain DSM 17343 / BCRC 17206 / CCUG 44338 / CIP 107171 / LMG 19424 / R1) (Ralstonia taiwanensis (strain LMG 19424)).